The chain runs to 176 residues: Ribosome maturation factor RimM (176 aa).

Residues 97–176 (DNDFYHRDLI…QIVVDWDPDF (80 aa)) enclose the PRC barrel domain.

The protein belongs to the RimM family. Binds ribosomal protein uS19.

The protein resides in the cytoplasm. In terms of biological role, an accessory protein needed during the final step in the assembly of 30S ribosomal subunit, possibly for assembly of the head region. Essential for efficient processing of 16S rRNA. May be needed both before and after RbfA during the maturation of 16S rRNA. It has affinity for free ribosomal 30S subunits but not for 70S ribosomes. This is Ribosome maturation factor RimM from Shewanella denitrificans (strain OS217 / ATCC BAA-1090 / DSM 15013).